We begin with the raw amino-acid sequence, 166 residues long: NAD(P)H-quinone oxidoreductase subunit I, chloroplastic (166 aa).

4Fe-4S ferredoxin-type domains follow at residues glycine 55–lysine 84 and leucine 95–glutamate 124. Positions 64, 67, 70, 74, 104, 107, 110, and 114 each coordinate [4Fe-4S] cluster.

The protein belongs to the complex I 23 kDa subunit family. In terms of assembly, NDH is composed of at least 16 different subunits, 5 of which are encoded in the nucleus. [4Fe-4S] cluster serves as cofactor.

Its subcellular location is the plastid. It localises to the chloroplast thylakoid membrane. The enzyme catalyses a plastoquinone + NADH + (n+1) H(+)(in) = a plastoquinol + NAD(+) + n H(+)(out). The catalysed reaction is a plastoquinone + NADPH + (n+1) H(+)(in) = a plastoquinol + NADP(+) + n H(+)(out). Functionally, NDH shuttles electrons from NAD(P)H:plastoquinone, via FMN and iron-sulfur (Fe-S) centers, to quinones in the photosynthetic chain and possibly in a chloroplast respiratory chain. The immediate electron acceptor for the enzyme in this species is believed to be plastoquinone. Couples the redox reaction to proton translocation, and thus conserves the redox energy in a proton gradient. The polypeptide is NAD(P)H-quinone oxidoreductase subunit I, chloroplastic (Raillardella argentea (Silky raillardella)).